The primary structure comprises 223 residues: uncharacterized protein (223 aa).

Over residues 1 to 11 the composition is skewed to basic residues; the sequence is MLWVQRKRRRK. Residues 1–37 are disordered; it reads MLWVQRKRRRKETSECPSDKDKSPESHKAKNESWIKS. Basic and acidic residues predominate over residues 12-37; it reads ETSECPSDKDKSPESHKAKNESWIKS. The residue at position 43 (Ser43) is a Phosphoserine. Disordered stretches follow at residues 49-73 and 196-223; these read LDNN…SSTV and THTF…NRRH. Residues 51-61 show a composition bias toward polar residues; sequence NNASASGNATQ. Residues 62 to 73 show a composition bias toward low complexity; it reads TESGSEEVSSTV. The segment covering 202–223 has biased composition (basic residues); that stretch reads HSHHSHHGHPSHQSHSLPNRRH.

This is an uncharacterized protein from Homo sapiens (Human).